The following is a 165-amino-acid chain: Endoribonuclease YbeY (165 aa).

Residues histidine 119, histidine 123, and histidine 129 each contribute to the Zn(2+) site.

It belongs to the endoribonuclease YbeY family. Zn(2+) serves as cofactor.

The protein localises to the cytoplasm. Single strand-specific metallo-endoribonuclease involved in late-stage 70S ribosome quality control and in maturation of the 3' terminus of the 16S rRNA. This is Endoribonuclease YbeY from Streptomyces griseus subsp. griseus (strain JCM 4626 / CBS 651.72 / NBRC 13350 / KCC S-0626 / ISP 5235).